Consider the following 598-residue polypeptide: Phospholipase B-like protein G (598 aa).

The N-terminal stretch at 1–24 (MIKSYYLFFIILIFLIFINNFILC) is a signal peptide. Residues Asn50, Asn98, Asn173, Asn341, Asn368, Asn450, Asn480, Asn526, and Asn576 are each glycosylated (N-linked (GlcNAc...) asparagine).

It belongs to the phospholipase B-like family.

It localises to the secreted. Its function is as follows. Probable phospholipase. The protein is Phospholipase B-like protein G (plbG) of Dictyostelium discoideum (Social amoeba).